Consider the following 436-residue polypeptide: Putative UDP-arabinose 4-epimerase 4 (436 aa).

The interval 1-20 (MLNSSGVRTQRRSPRPLSLG) is disordered. Over 1-60 (MLNSSGVRTQRRSPRPLSLGGRKIITPTKFAYDHHNPDKVLDFVEMDCLEPKTKNNLTGK) the chain is Cytoplasmic. The chain crosses the membrane as a helical; Signal-anchor for type II membrane protein span at residues 61-81 (LLLVASLLILAIIVISQSSSF). At 82 to 436 (TSPSAFSQRE…KIHPHGYNSY (355 aa)) the chain is on the lumenal side. 96 to 127 (HVLVTGGAGYIGSHAALRLLRDSYRVTIVDNL) contacts NAD(+). Tyr244 serves as the catalytic Proton acceptor.

The protein belongs to the NAD(P)-dependent epimerase/dehydratase family. It depends on NAD(+) as a cofactor.

The protein resides in the golgi apparatus. It is found in the golgi stack membrane. It catalyses the reaction UDP-beta-L-arabinopyranose = UDP-alpha-D-xylose. It functions in the pathway nucleotide-sugar biosynthesis; UDP-L-arabinose biosynthesis; UDP-L-arabinose from UDP-alpha-D-xylose: step 1/1. It participates in cell wall biogenesis; cell wall polysaccharide biosynthesis. In Arabidopsis thaliana (Mouse-ear cress), this protein is Putative UDP-arabinose 4-epimerase 4.